Reading from the N-terminus, the 848-residue chain is Probable serine/threonine-protein kinase DDB_G0278535 (848 aa).

3 stretches are compositionally biased toward low complexity: residues 1–52 (MNKS…NNNH), 60–85 (TAATTTTSTTGTGTTAATTSTSTSST), and 95–116 (TSNSNLATATNTPSSSPQVSTS). A disordered region spans residues 1 to 117 (MNKSSSASTV…SSSPQVSTSV (117 aa)). ANK repeat units follow at residues 181–212 (MDQTPLCAALRNGSHDIVREILFFYQSNKMDI), 218–248 (SGYTPLHVAASHCDDQILMLLLNYEGINVNI), 252–285 (DKNSALHYFCQKFRSPNCQEPFSIFLKKGVNVNA), 289–320 (NGETPLHKSIFNNTVRLLMVNMLLDAGAEVNV), and 324–353 (RGESPLHFAVRLGREDLVSVLVKAGADITI). The 64-residue stretch at 378 to 441 (KNVQDIFNWL…IRNCRILRDQ (64 aa)) folds into the SAM domain. The tract at residues 448–478 (NSNVTTGSGSSGSTTTTTTTTTTTSGCGGLN) is disordered. Residues 452 to 472 (TTGSGSSGSTTTTTTTTTTTS) show a composition bias toward low complexity. Residues 529-799 (LEYTLKLGSG…TLNRLRHEYM (271 aa)) enclose the Protein kinase domain. ATP is bound by residues 535–543 (LGSGSSGKV) and Lys556. Residue Asp650 is the Proton acceptor of the active site. The disordered stretch occupies residues 810–848 (RKLPSLSPPPQPTTTTTTTTSSSTSTNNINNNINNNNNT). Over residues 822–848 (TTTTTTTTSSSTSTNNINNNINNNNNT) the composition is skewed to low complexity.

This sequence belongs to the protein kinase superfamily. TKL Ser/Thr protein kinase family.

The catalysed reaction is L-seryl-[protein] + ATP = O-phospho-L-seryl-[protein] + ADP + H(+). The enzyme catalyses L-threonyl-[protein] + ATP = O-phospho-L-threonyl-[protein] + ADP + H(+). The protein is Probable serine/threonine-protein kinase DDB_G0278535 of Dictyostelium discoideum (Social amoeba).